Reading from the N-terminus, the 623-residue chain is Zinc finger protein 143 (623 aa).

7 C2H2-type zinc fingers span residues 230 to 254 (FRCE…ERSH), 260 to 284 (YICD…VRTH), 290 to 314 (YRCQ…TRTH), 320 to 344 (FKCP…IRTH), 350 to 374 (YYCA…MRIH), 380 to 404 (YVCT…HVVH), and 410 to 433 (YNCN…RTAH).

Belongs to the GLI C2H2-type zinc-finger protein family.

The protein resides in the nucleus. Its function is as follows. Transcriptional activator. Activates the gene for selenocysteine tRNA (tRNAsec). Binds to the activator element (AE) motif of the selenocysteine tRNA gene promoter. This is Zinc finger protein 143 (znf143) from Danio rerio (Zebrafish).